Here is a 66-residue protein sequence, read N- to C-terminus: Large ribosomal subunit protein bL33c (66 aa).

The protein belongs to the bacterial ribosomal protein bL33 family.

The protein localises to the plastid. It is found in the chloroplast. This Dioscorea elephantipes (Elephant's foot yam) protein is Large ribosomal subunit protein bL33c.